The primary structure comprises 572 residues: Urease subunit alpha (572 aa).

In terms of domain architecture, Urease spans 133-572; that stretch reads GGIDLHVHYI…TSLSQRYFLF (440 aa). 3 residues coordinate Ni(2+): H138, H140, and K221. N6-carboxylysine is present on K221. H223 contacts substrate. Ni(2+)-binding residues include H250 and H276. H324 functions as the Proton donor in the catalytic mechanism. D364 contributes to the Ni(2+) binding site.

The protein belongs to the metallo-dependent hydrolases superfamily. Urease alpha subunit family. As to quaternary structure, heterotrimer of UreA (gamma), UreB (beta) and UreC (alpha) subunits. Three heterotrimers associate to form the active enzyme. The cofactor is Ni cation. In terms of processing, carboxylation allows a single lysine to coordinate two nickel ions.

The protein resides in the cytoplasm. It catalyses the reaction urea + 2 H2O + H(+) = hydrogencarbonate + 2 NH4(+). Its pathway is nitrogen metabolism; urea degradation; CO(2) and NH(3) from urea (urease route): step 1/1. This is Urease subunit alpha from Streptococcus thermophilus (strain CNRZ 1066).